Here is a 372-residue protein sequence, read N- to C-terminus: Peptidyl-prolyl cis-trans isomerase D (372 aa).

The PPIase cyclophilin-type domain occupies 14–178 (YFDISIGGKS…KEALIVDCGE (165 aa)). 3 TPR repeats span residues 219–252 (AKASKDYGNTAFKSGNYSLGLDKYQKGLRYINEE), 271–304 (FSLNNNSALLNIKLEAWDDAARSASAALEVGGVK), and 309–342 (AKAFYRRGLANIHLKDEEAAVRDLTEANKLAPND).

Belongs to the cyclophilin-type PPIase family. PPIase D subfamily.

Its subcellular location is the cytoplasm. The catalysed reaction is [protein]-peptidylproline (omega=180) = [protein]-peptidylproline (omega=0). In terms of biological role, PPIases accelerate the folding of proteins. It catalyzes the cis-trans isomerization of proline imidic peptide bonds in oligopeptides. The chain is Peptidyl-prolyl cis-trans isomerase D (CPR6) from Gibberella zeae (strain ATCC MYA-4620 / CBS 123657 / FGSC 9075 / NRRL 31084 / PH-1) (Wheat head blight fungus).